The chain runs to 304 residues: ATP synthase gamma chain (304 aa).

Belongs to the ATPase gamma chain family. As to quaternary structure, F-type ATPases have 2 components, CF(1) - the catalytic core - and CF(0) - the membrane proton channel. CF(1) has five subunits: alpha(3), beta(3), gamma(1), delta(1), epsilon(1). CF(0) has three main subunits: a, b and c.

It is found in the cell membrane. Its function is as follows. Produces ATP from ADP in the presence of a proton gradient across the membrane. The gamma chain is believed to be important in regulating ATPase activity and the flow of protons through the CF(0) complex. The chain is ATP synthase gamma chain from Mycolicibacterium paratuberculosis (strain ATCC BAA-968 / K-10) (Mycobacterium paratuberculosis).